A 157-amino-acid chain; its full sequence is 3-hydroxyacyl-[acyl-carrier-protein] dehydratase FabZ (157 aa).

His-58 is a catalytic residue.

This sequence belongs to the thioester dehydratase family. FabZ subfamily.

Its subcellular location is the cytoplasm. It carries out the reaction a (3R)-hydroxyacyl-[ACP] = a (2E)-enoyl-[ACP] + H2O. Functionally, involved in unsaturated fatty acids biosynthesis. Catalyzes the dehydration of short chain beta-hydroxyacyl-ACPs and long chain saturated and unsaturated beta-hydroxyacyl-ACPs. In Brucella melitensis biotype 2 (strain ATCC 23457), this protein is 3-hydroxyacyl-[acyl-carrier-protein] dehydratase FabZ.